Consider the following 195-residue polypeptide: Cytochrome b-245 light chain (195 aa).

The Cytoplasmic segment spans residues 2–7 (GQIEWA). Residues 8 to 30 (MWANEQALASGLILITGGIVATA) form a helical membrane-spanning segment. The Extracellular portion of the chain corresponds to 31 to 35 (GRFTQ). The chain crosses the membrane as a helical span at residues 36–53 (WYFGAYSIVAGVFVCLLE). Topologically, residues 54-69 (YPRGKRKKGSTMERWG) are cytoplasmic. Residues 70–80 (QKYMTAVVKLF) lie within the membrane without spanning it. Residues 81 to 86 (GPFTRN) lie on the Cytoplasmic side of the membrane. The chain crosses the membrane as a helical span at residues 87–104 (YYVRAVLHLLLSVPAGFL). L105 is a topological domain (extracellular). Residues 106-126 (ATILGTACLAIASGIYLLAAV) traverse the membrane as a helical segment. Over 127 to 195 (RGEQWTPIEP…NPIPVTDEVV (69 aa)) the chain is Cytoplasmic. The interval 134 to 195 (IEPKPRERPQ…NPIPVTDEVV (62 aa)) is disordered. The residue at position 147 (T147) is a Phosphothreonine. Residue K149 forms a Glycyl lysine isopeptide (Lys-Gly) (interchain with G-Cter in ubiquitin) linkage. At S168 the chain carries Phosphoserine.

Belongs to the p22phox family. In terms of assembly, component of the phagocyte NADPH oxidase core complex/cytochrome b558 complex, composed of CYBB (heavy chain (beta)) and CYBA (light chain (alpha)). Component of the phagocyte NADPH oxidase complex composed of an obligatory core heterodimer formed by the membrane proteins CYBA and CYBB and the cytosolic regulatory subunits NCF1/p47-phox, NCF2/p67-phox, NCF4/p40-phox and the small GTPase RAC1 or RAC2. Interacts with NCF1 (via SH3 domain). Interacts with SH3PXD2A. Interacts with DUOX1, DUOX2 and TPO. Interacts with NOX4; this interaction mediates superoxide generation. Interacts with calprotectin (S100A8/9). Interacts with GBP7. Interacts with NOXO1. Forms a heterodimer with NOX3 and is essential for activity and cell membrane localization of NOX3. Interacts with NOX1. Phosphorylation at Thr-147 enhances NADPH oxidase activity by promoting NCF1/p47-phox binding. Post-translationally, ubiquitinated at Lys-149 likely by RNF145.

Its subcellular location is the cell membrane. In terms of biological role, subunit of NADPH oxidase complexes that is required for the NADPH oxidase activity that generates, in various cell types, superoxide from molecular oxygen utilizing NADPH as an electron donor. Subunit of the phagocyte NADPH oxidase complex that mediates the transfer of electrons from cytosolic NADPH to O2 to produce the superoxide anion (O2(-)). In the activated complex, electrons are first transferred from NADPH to flavin adenine dinucleotide (FAD) and subsequently transferred via two heme molecules to molecular oxygen, producing superoxide through an outer-sphere reaction. Activation of the NADPH oxidase complex is initiated by the assembly of cytosolic subunits of the NADPH oxidase complex with the core NADPH oxidase complex to form a complex at the plasma membrane or phagosomal membrane. This activation process is initiated by phosphorylation dependent binding of the cytosolic NCF1/p47-phox subunit to the C-terminus of CYBA/p22-phox. Aassociates with NOX3 to form a functional NADPH oxidase constitutively generating superoxide. This chain is Cytochrome b-245 light chain, found in Homo sapiens (Human).